A 135-amino-acid chain; its full sequence is Small ribosomal subunit protein bS6 (135 aa).

N6-acetyllysine is present on K93. Residues 98 to 135 (EASPMVKAKDERRERRDDFANETADDAEAGDSEEEEEE) are disordered. Basic and acidic residues predominate over residues 104–116 (KAKDERRERRDDF). A compositionally biased stretch (acidic residues) spans 120–135 (TADDAEAGDSEEEEEE).

The protein belongs to the bacterial ribosomal protein bS6 family. As to quaternary structure, part of the 30S ribosomal subunit. Interacts weakly with uL2 in one of the 3.5 A resolved structures. In terms of processing, 5 different forms of the protein, varying only in the number of C-terminal glutamate residues, were isolated. The sequence shown is form bS6-6, which is the longest. The first two Glu are encoded by the rpsF gene, the other Glu are added post-translationally by the RimK enzyme.

In terms of biological role, binds together with bS18 to 16S ribosomal RNA. The polypeptide is Small ribosomal subunit protein bS6 (rpsF) (Escherichia coli (strain K12)).